We begin with the raw amino-acid sequence, 162 residues long: MGLETEKADVQLFMADDAYSHHSVVDYTDPEKYVDSSQDRDPHQLNSHLKLGFEDLIAEPPTTHSFDKVWICSHALFEISKYVIYKFLTVFLAIPLAFIAGILFATLSCLHIWILMPFVKTCLMVLPSVQTIWKSVTDVVIGPLCTSVGRIFSSVSMQLSHD.

Topologically, residues 1 to 86 are cytoplasmic; that stretch reads MGLETEKADV…FEISKYVIYK (86 aa). Phosphotyrosine; by SRC is present on Tyr19. Phosphoserine is present on residues Ser20 and Ser23. Tyr27 carries the post-translational modification Phosphotyrosine; by SRC. Ser36 is subject to Phosphoserine. Residues 87–107 constitute an intramembrane region (helical); that stretch reads FLTVFLAIPLAFIAGILFATL. The Cytoplasmic segment spans residues 108–162; the sequence is SCLHIWILMPFVKTCLMVLPSVQTIWKSVTDVVIGPLCTSVGRIFSSVSMQLSHD.

This sequence belongs to the caveolin family. As to quaternary structure, monomer or homodimer. Interacts with CAV1; the interaction forms a stable heterooligomeric complex that is required for targeting to lipid rafts and for caveolae formation. Tyrosine phosphorylated forms do not form heterooligomers with the Tyr-19-phosphorylated form existing as a monomer or dimer and the Tyr-27-form as a monomer only. Interacts (tyrosine phosphorylated form) with the SH2 domain-containing proteins, RASA1, NCK1 and SRC. Interacts (tyrosine phosphorylated form) with INSR; the interaction (Tyr-27-phosphorylated form) is increased on insulin stimulation. Interacts (Tyr-19-phosphorylated form) with MAPK1 (phosphorylated form); the interaction, promoted by insulin, leads to nuclear location and MAPK1 activation. Interacts with STAT3; the interaction is increased on insulin-induced tyrosine phosphorylation leading to STAT activation. In terms of processing, phosphorylated on serine and tyrosine residues. CAV1 promotes phosphorylation on Ser-23 which targets the complex to the plasma membrane, lipid rafts and caveolae. Phosphorylation on Ser-36 appears to modulate mitosis in endothelial cells. Phosphorylation on both Tyr-19 and Tyr-27 is required for insulin-induced 'Ser-727' phosphorylation of STAT3 and its activation. Phosphorylation on Tyr-19 is required for insulin-induced phosphorylation of MAPK1 and DNA binding of STAT3. Tyrosine phosphorylation is induced by both EGF and insulin. In terms of tissue distribution, in the retina, mainly expressed in vessels, but also diffuse expression in the inner and outer plexiform layers and in the inner nuclear layer.

It localises to the nucleus. The protein localises to the cytoplasm. The protein resides in the golgi apparatus membrane. It is found in the cell membrane. Its subcellular location is the membrane. It localises to the caveola. Its function is as follows. May act as a scaffolding protein within caveolar membranes. Interacts directly with G-protein alpha subunits and can functionally regulate their activity. Acts as an accessory protein in conjunction with CAV1 in targeting to lipid rafts and driving caveolae formation. The Ser-36 phosphorylated form has a role in modulating mitosis in endothelial cells. Positive regulator of cellular mitogenesis of the MAPK signaling pathway. Required for the insulin-stimulated nuclear translocation and activation of MAPK1 and STAT3, and the subsequent regulation of cell cycle progression. The polypeptide is Caveolin-2 (Cav2) (Rattus norvegicus (Rat)).